A 576-amino-acid chain; its full sequence is MPVAATNSETAMQQVLDNLGSLPSATGAAELDLIFLRGIMESPIVRSLAKVIMVLWFMQQNVFVPMKYMLKYFGAHERLEETKLEAVRDNNLELVQEILRDLAHVAEQSSTAAELAHILQEPHFQSLLETHDSVASKTYETPPPSPGLDPTFSNQPVPPDAVRMVGIRKTAGEHLGVTFRVEGGELVIARILHGGMVAQQGLLHVGDIIKEVNGQPVGSDPRALQELLRNASGSVILKILPSYQEPHLPRQVFVKCHFDYDPARDSLIPCKEAGLRFNAGDLLQIVNQDDANWWQACHVEGGSAGLIPSQLLEEKRKAFVKRDLELTPNSGTLCGSLSGKKKKRMMYLTTKNAEFDRHELLIYEEVARMPPFRRKTLVLIGAQGVGRRSLKNKLIMWDPDRYGTTVPYTSRRPKDSEREGQGYSFVSRGEMEADVRAGRYLEHGEYEGNLYGTRIDSIRGVVAAGKVCVLDVNPQAVKVLRTAEFVPYVVFIEAPDFETLRAMNRAALESGISTKQLTEADLRRTVEESSRIQRGYGHYFDLCLVNSNLERTFRELQTAMEKLRTEPQWVPVSWVY.

L27 domains are found at residues 8-60 and 84-142; these read SETA…FMQQ and LEAV…YETP. The residue at position 42 (S42) is a Phosphoserine. The residue at position 141 (T141) is a Phosphothreonine. Residue S145 is modified to Phosphoserine. One can recognise a PDZ domain in the interval 185-240; sequence ELVIARILHGGMVAQQGLLHVGDIIKEVNGQPVGSDPRALQELLRNASGSVILKIL. The 69-residue stretch at 249-317 folds into the SH3 domain; it reads PRQVFVKCHF…PSQLLEEKRK (69 aa). In terms of domain architecture, Guanylate kinase-like spans 374–561; it reads RKTLVLIGAQ…TFRELQTAME (188 aa).

Belongs to the MAGUK family. In terms of assembly, can homomultimerise. Interacts with CACNG2. Interacts (via the SH3-Guanylate kinase-like sub-module) with DLG4/PSD95 and DLGAP1/GKAP. Interacts (via the PDZ domain) with CADM1 (via C-terminus). Interacts with KCNN2/SK2 (via N-terminal domain). Interacts with SRC. Post-translationally, phosphorylated by SRC.

It localises to the cytoplasm. It is found in the cytoskeleton. The protein resides in the membrane. Its subcellular location is the cell projection. The protein localises to the dendrite. It localises to the postsynaptic density. Its function is as follows. Postsynaptic MAGUK scaffold protein that links CADM1 cell adhesion molecules to core components of the postsynaptic density. In CA1 pyramidal neurons, required for synaptic KCNN2-containing channel function and long-term potentiation expression. Seems to negatively regulate SRC function in epithelial cells. The sequence is that of MAGUK p55 subfamily member 2 from Homo sapiens (Human).